The sequence spans 270 residues: tRNA pseudouridine synthase A (270 aa).

D60 serves as the catalytic Nucleophile. The interval 107–111 (FHARF) is RNA binding. Substrate is bound at residue Y118. The interval 168–172 (QCQSR) is interaction with tRNA.

The protein belongs to the tRNA pseudouridine synthase TruA family. In terms of assembly, homodimer.

The enzyme catalyses uridine(38/39/40) in tRNA = pseudouridine(38/39/40) in tRNA. In terms of biological role, formation of pseudouridine at positions 38, 39 and 40 in the anticodon stem and loop of transfer RNAs. The protein is tRNA pseudouridine synthase A of Shigella sonnei (strain Ss046).